Here is a 403-residue protein sequence, read N- to C-terminus: MSLQAIQFQRGDKSQVSVRVLDQLLLPYVSRYIPIQTVDDGFAVIRSMQVRGAPAIAIVGVLSVLVECQLLCNEDFVAVQAFYDLSSYAAFGRTMRMRLAHLLGSRPTAVNLSHALRDVERLLDSATSLSQFRDRMYDYACELLDMDVANNVRMGDNGARFLLDALIAEGFDGSFAVLTICNTGSLATAGYGTALGAIRSLWQHAEAGLTAPKKQKASACAPRMTHVFPLETRPYNQGSRLTAYELLHDAIPATLITDSSVAYRIQTSPVPIKAAFVGADRIARNGDTANKIGTLQLALVCRHFGIRFFVVAPRSTVDGTTAAGTDIPVEERCPDEFRVVTGAAAGATGDPTTASVAIAPRDMPVWNPAFDVTPHAYIDAIVTETRVFTKDAAGNFDLDELFT.

The active-site Proton donor is the Asp-280.

Belongs to the eIF-2B alpha/beta/delta subunits family. MtnA subfamily.

It is found in the cytoplasm. It localises to the nucleus. It carries out the reaction 5-(methylsulfanyl)-alpha-D-ribose 1-phosphate = 5-(methylsulfanyl)-D-ribulose 1-phosphate. It participates in amino-acid biosynthesis; L-methionine biosynthesis via salvage pathway; L-methionine from S-methyl-5-thio-alpha-D-ribose 1-phosphate: step 1/6. Its function is as follows. Catalyzes the interconversion of methylthioribose-1-phosphate (MTR-1-P) into methylthioribulose-1-phosphate (MTRu-1-P). The polypeptide is Methylthioribose-1-phosphate isomerase (Eremothecium gossypii (strain ATCC 10895 / CBS 109.51 / FGSC 9923 / NRRL Y-1056) (Yeast)).